Here is a 386-residue protein sequence, read N- to C-terminus: IgA receptor (386 aa).

Positions 1–41 (MARKDTNKQYSLRKLKTGTASVAVAVAVLGAGFANQTEVKA) are cleaved as a signal peptide. The interval 42–152 (AEIKKPQADS…QKKHQQEQQQ (111 aa)) is igA-binding. Composition is skewed to basic and acidic residues over residues 79–88 (YADDKEKDPQ), 97–128 (QDLRKREGQYQDKIEELEKERKEKQERQEQLE), 134–166 (EADKHYQEQQKKHQQEQQQLEAEKQKLAKDKQI), 174–201 (LSRDLEASRAAKKELEAEHQKLKEEKQI), 209–221 (LSRDLEASREAKK), 233–243 (EHQKLKEDKQI), and 251–267 (LSRDLEASREAKKKVEA). 2 disordered regions span residues 79–221 (YADD…EAKK) and 233–268 (EHQKLKEDKQISDASRQGLSRDLEASREAKKKVEAD). 3 C repeats span residues 158–192 (QKLAKDKQISDASRQGLSRDLEASRAAKKELEAEH), 193–227 (QKLKEEKQISDASRQGLSRDLEASREAKKKVEADL), and 235–269 (QKLKEDKQISDASRQGLSRDLEASREAKKKVEADL). 4 D repeats span residues 302–307 (ARLEAE), 308–313 (AKALKE), 316–321 (AKQAEE), and 323–328 (AKLKGN). The interval 323 to 360 (AKLKGNQTPNAKVAPQANRSRSAMTQQKRTLPSTGETA) is disordered. Positions 339–359 (ANRSRSAMTQQKRTLPSTGET) are enriched in polar residues. The LPXTG sorting signal signature appears at 353–357 (LPSTG). Thr356 carries the post-translational modification Pentaglycyl murein peptidoglycan amidated threonine. Residues 357–386 (GETANPFFTAAAATVMVSAGMLALKRKEEN) constitute a propeptide, removed by sortase.

The protein belongs to the M protein family.

The protein resides in the secreted. It is found in the cell wall. Functionally, binds IgA of both subclasses, and also binds polyclonal IgG weakly. This chain is IgA receptor (arp4), found in Streptococcus pyogenes.